The chain runs to 300 residues: Protoheme IX farnesyltransferase (300 aa).

9 helical membrane-spanning segments follow: residues 20 to 40, 43 to 63, 94 to 114, 116 to 136, 142 to 162, 173 to 193, 215 to 235, 241 to 261, and 276 to 296; these read ITKM…YFLG, TIDF…VGAS, PVAF…LYVI, PKTA…YTPL, LSVF…WVAA, LFMI…WWLF, IQII…VFGV, LTPV…YYAI, and MFAS…DKFI.

Belongs to the UbiA prenyltransferase family. Protoheme IX farnesyltransferase subfamily.

It is found in the cell membrane. The enzyme catalyses heme b + (2E,6E)-farnesyl diphosphate + H2O = Fe(II)-heme o + diphosphate. It functions in the pathway porphyrin-containing compound metabolism; heme O biosynthesis; heme O from protoheme: step 1/1. Functionally, converts heme B (protoheme IX) to heme O by substitution of the vinyl group on carbon 2 of heme B porphyrin ring with a hydroxyethyl farnesyl side group. This is Protoheme IX farnesyltransferase from Christiangramia forsetii (strain DSM 17595 / CGMCC 1.15422 / KT0803) (Gramella forsetii).